The sequence spans 430 residues: S-adenosylmethionine synthase (430 aa).

ATP is bound at residue His14. Residue Asp16 participates in Mg(2+) binding. Residue Glu42 coordinates K(+). L-methionine is bound by residues Glu55 and Gln98. Residues 98–108 (QSADINRGVER) form a flexible loop region. ATP is bound by residues 164–166 (DAK), 254–255 (KF), Asp263, 269–270 (RK), Ala286, and Lys290. Residue Asp263 coordinates L-methionine. An L-methionine-binding site is contributed by Lys294.

This sequence belongs to the AdoMet synthase family. Homotetramer; dimer of dimers. It depends on Mg(2+) as a cofactor. The cofactor is K(+).

Its subcellular location is the cytoplasm. It carries out the reaction L-methionine + ATP + H2O = S-adenosyl-L-methionine + phosphate + diphosphate. It functions in the pathway amino-acid biosynthesis; S-adenosyl-L-methionine biosynthesis; S-adenosyl-L-methionine from L-methionine: step 1/1. Its function is as follows. Catalyzes the formation of S-adenosylmethionine (AdoMet) from methionine and ATP. The overall synthetic reaction is composed of two sequential steps, AdoMet formation and the subsequent tripolyphosphate hydrolysis which occurs prior to release of AdoMet from the enzyme. This chain is S-adenosylmethionine synthase, found in Phocaeicola vulgatus (strain ATCC 8482 / DSM 1447 / JCM 5826 / CCUG 4940 / NBRC 14291 / NCTC 11154) (Bacteroides vulgatus).